Consider the following 58-residue polypeptide: UPF0337 protein CE1672 (58 aa).

The segment covering 1–39 has biased composition (basic and acidic residues); that stretch reads MGLGDKIRNTAEKASGKVKEATGKATDNEKLEAEGKTDQ. The interval 1–58 is disordered; that stretch reads MGLGDKIRNTAEKASGKVKEATGKATDNEKLEAEGKTDQFKGNAKNTVENAKDTLRGN.

This sequence belongs to the UPF0337 (CsbD) family.

The protein is UPF0337 protein CE1672 of Corynebacterium efficiens (strain DSM 44549 / YS-314 / AJ 12310 / JCM 11189 / NBRC 100395).